Reading from the N-terminus, the 225-residue chain is Germin-like protein 8-6 (225 aa).

The first 23 residues, 1-23 (MASPSSLCLLTALLALVSWQTIA), serve as a signal peptide directing secretion. A disulfide bond links Cys-33 and Cys-48. Residues 63–213 (AMLDTPRKTN…AFQVEKGTID (151 aa)) form the Cupin type-1 domain. The N-linked (GlcNAc...) asparagine glycan is linked to Asn-77. Positions 110, 112, and 117 each coordinate Mn(2+). Asn-136 carries an N-linked (GlcNAc...) asparagine glycan. His-158 provides a ligand contact to Mn(2+).

The protein belongs to the germin family. As to quaternary structure, oligomer (believed to be a pentamer but probably hexamer).

The protein localises to the secreted. Its subcellular location is the extracellular space. The protein resides in the apoplast. In terms of biological role, plays a role in broad-spectrum disease resistance. Probably has no oxalate oxidase activity even if the active site is conserved. The sequence is that of Germin-like protein 8-6 from Oryza sativa subsp. japonica (Rice).